A 125-amino-acid chain; its full sequence is Evasin P672 (125 aa).

Positions Met1 to Ala21 are cleaved as a signal peptide. Asn35, Asn55, Asn65, Asn72, Asn78, Asn104, Asn112, and Asn118 each carry an N-linked (GlcNAc...) asparagine glycan. 3 cysteine pairs are disulfide-bonded: Cys70–Cys110, Cys87–Cys115, and Cys105–Cys124.

The protein resides in the secreted. Salivary chemokine-binding protein which has chemokine-neutralizing activity and binds to host chemokines CCL1, CCL2, CCL3, CCL3L1, CCL7, CCL8, CCL11, CCL12, CCL13, CCL14, CCL15, CCL16, CCL18 and CCL23. Binds to CCL8 with 1:1 stoichiometry and disrupts CCL8 homodimer formation. This is Evasin P672 from Rhipicephalus pulchellus (Yellow backed tick).